A 145-amino-acid polypeptide reads, in one-letter code: SsrA-binding protein (145 aa).

Belongs to the SmpB family.

It is found in the cytoplasm. Its function is as follows. Required for rescue of stalled ribosomes mediated by trans-translation. Binds to transfer-messenger RNA (tmRNA), required for stable association of tmRNA with ribosomes. tmRNA and SmpB together mimic tRNA shape, replacing the anticodon stem-loop with SmpB. tmRNA is encoded by the ssrA gene; the 2 termini fold to resemble tRNA(Ala) and it encodes a 'tag peptide', a short internal open reading frame. During trans-translation Ala-aminoacylated tmRNA acts like a tRNA, entering the A-site of stalled ribosomes, displacing the stalled mRNA. The ribosome then switches to translate the ORF on the tmRNA; the nascent peptide is terminated with the 'tag peptide' encoded by the tmRNA and targeted for degradation. The ribosome is freed to recommence translation, which seems to be the essential function of trans-translation. The sequence is that of SsrA-binding protein from Mycoplasma genitalium (strain ATCC 33530 / DSM 19775 / NCTC 10195 / G37) (Mycoplasmoides genitalium).